The primary structure comprises 85 residues: Large ribosomal subunit protein bL27 (85 aa).

The tract at residues 1-20 is disordered; it reads MAHKKAGGSTRNGRDSESKR.

This sequence belongs to the bacterial ribosomal protein bL27 family.

The chain is Large ribosomal subunit protein bL27 from Yersinia enterocolitica serotype O:8 / biotype 1B (strain NCTC 13174 / 8081).